A 146-amino-acid chain; its full sequence is MRLLQLLFRASPATLLLVLCLQLGANKAQDNTRKIIIKNFDIPKSVRPNDEVTAVLAVQTELKECMVVKTYLISSVPLQGAFNYKYTACLCDDNPKTFYWDFYANRTVQIAAVIDVIQELGICPDDAAVIPIKNNRFYTTEILEVE.

The N-terminal stretch at 1–28 (MRLLQLLFRASPATLLLVLCLQLGANKA) is a signal peptide. Q29 is subject to Pyrrolidone carboxylic acid. Intrachain disulfides connect C65–C91 and C89–C123. A glycan (N-linked (GlcNAc...) asparagine) is linked at N105.

This sequence belongs to the PIP family. As to quaternary structure, monomer. Interacts with AZGP1.

It localises to the secreted. This chain is Prolactin-inducible protein homolog (PIP), found in Gorilla gorilla gorilla (Western lowland gorilla).